A 209-amino-acid chain; its full sequence is Small ribosomal subunit protein uS4 (209 aa).

Residues 99–160 (RRLDNVVYRL…GSKEMTLLGQ (62 aa)) enclose the S4 RNA-binding domain.

The protein belongs to the universal ribosomal protein uS4 family. As to quaternary structure, part of the 30S ribosomal subunit. Contacts protein S5. The interaction surface between S4 and S5 is involved in control of translational fidelity.

Functionally, one of the primary rRNA binding proteins, it binds directly to 16S rRNA where it nucleates assembly of the body of the 30S subunit. In terms of biological role, with S5 and S12 plays an important role in translational accuracy. The chain is Small ribosomal subunit protein uS4 from Koribacter versatilis (strain Ellin345).